The chain runs to 390 residues: Transforming growth factor beta-1 proprotein (390 aa).

Residues Met1–Gly29 form the signal peptide. A straightjacket domain region spans residues Leu30–Pro74. The arm domain stretch occupies residues Glu75 to Leu271. Asn82, Asn136, and Asn176 each carry an N-linked (GlcNAc...) asparagine glycan. A bowtie tail region spans residues Asp226–Gly252. A Cell attachment site motif is present at residues Arg244–Asp246. 4 disulfides stabilise this stretch: Cys285-Cys294, Cys293-Cys356, Cys322-Cys387, and Cys326-Cys389.

This sequence belongs to the TGF-beta family. In terms of assembly, homodimer; disulfide-linked. Interacts with the serine proteases, HTRA1 and HTRA3: the interaction with either inhibits TGFB1-mediated signaling and the HTRA protease activity is required for this inhibition. May interact with THSD4; this interaction may lead to sequestration by FBN1 microfibril assembly and attenuation of TGFB signaling. Interacts with CD109, DPT and ASPN. Interacts with EFEMP2. Interacts with TSKU; the interaction contributes to regulation of the hair cycle. Interacts with TGFBR3. As to quaternary structure, homodimer; disulfide-linked. Interacts with transforming growth factor beta-1 (TGF-beta-1) chain; interaction is non-covalent and maintains TGF-beta-1 in a latent state; each latency-associated peptide (LAP) monomer interacts with TGF-beta-1 in the other monomer. Interacts with LTBP1; leading to regulation of TGF-beta-1 activation. Interacts with LRRC32/GARP; leading to regulation of TGF-beta-1 activation on the surface of activated regulatory T-cells (Tregs). Interacts with LRRC33/NRROS; leading to regulation of TGF-beta-1 activation in macrophages and microglia. Interacts (via cell attachment site) with integrins ITGAV and ITGB6 (ITGAV:ITGB6), leading to release of the active TGF-beta-1. Interacts with NREP; the interaction results in a decrease in TGFB1 autoinduction. Interacts with HSP90AB1; inhibits latent TGFB1 activation. Homodimer; disulfide-linked. Interacts with TGF-beta receptors (TGFBR1 and TGFBR2), leading to signal transduction. Post-translationally, transforming growth factor beta-1 proprotein: The precursor proprotein is cleaved in the Golgi apparatus by FURIN to form Transforming growth factor beta-1 (TGF-beta-1) and Latency-associated peptide (LAP) chains, which remain non-covalently linked, rendering TGF-beta-1 inactive. In terms of processing, N-glycosylated. Deglycosylation leads to activation of Transforming growth factor beta-1 (TGF-beta-1); mechanisms triggering deglycosylation-driven activation of TGF-beta-1 are however unclear.

The protein resides in the secreted. It localises to the extracellular space. It is found in the extracellular matrix. In terms of biological role, transforming growth factor beta-1 proprotein: Precursor of the Latency-associated peptide (LAP) and Transforming growth factor beta-1 (TGF-beta-1) chains, which constitute the regulatory and active subunit of TGF-beta-1, respectively. Functionally, required to maintain the Transforming growth factor beta-1 (TGF-beta-1) chain in a latent state during storage in extracellular matrix. Associates non-covalently with TGF-beta-1 and regulates its activation via interaction with 'milieu molecules', such as LTBP1, LRRC32/GARP and LRRC33/NRROS, that control activation of TGF-beta-1. Interaction with LRRC33/NRROS regulates activation of TGF-beta-1 in macrophages and microglia. Interaction with LRRC32/GARP controls activation of TGF-beta-1 on the surface of activated regulatory T-cells (Tregs). Interaction with integrins (ITGAV:ITGB6 or ITGAV:ITGB8) results in distortion of the Latency-associated peptide chain and subsequent release of the active TGF-beta-1. Its function is as follows. Multifunctional protein that regulates the growth and differentiation of various cell types and is involved in various processes, such as normal development, immune function, microglia function and responses to neurodegeneration. Activation into mature form follows different steps: following cleavage of the proprotein in the Golgi apparatus, Latency-associated peptide (LAP) and Transforming growth factor beta-1 (TGF-beta-1) chains remain non-covalently linked rendering TGF-beta-1 inactive during storage in extracellular matrix. At the same time, LAP chain interacts with 'milieu molecules', such as LTBP1, LRRC32/GARP and LRRC33/NRROS that control activation of TGF-beta-1 and maintain it in a latent state during storage in extracellular milieus. TGF-beta-1 is released from LAP by integrins (ITGAV:ITGB6 or ITGAV:ITGB8): integrin-binding to LAP stabilizes an alternative conformation of the LAP bowtie tail and results in distortion of the LAP chain and subsequent release of the active TGF-beta-1. Once activated following release of LAP, TGF-beta-1 acts by binding to TGF-beta receptors (TGFBR1 and TGFBR2), which transduce signal. While expressed by many cells types, TGF-beta-1 only has a very localized range of action within cell environment thanks to fine regulation of its activation by Latency-associated peptide chain (LAP) and 'milieu molecules'. Plays an important role in bone remodeling: acts as a potent stimulator of osteoblastic bone formation, causing chemotaxis, proliferation and differentiation in committed osteoblasts. Can promote either T-helper 17 cells (Th17) or regulatory T-cells (Treg) lineage differentiation in a concentration-dependent manner. At high concentrations, leads to FOXP3-mediated suppression of RORC and down-regulation of IL-17 expression, favoring Treg cell development. At low concentrations in concert with IL-6 and IL-21, leads to expression of the IL-17 and IL-23 receptors, favoring differentiation to Th17 cells. Stimulates sustained production of collagen through the activation of CREB3L1 by regulated intramembrane proteolysis (RIP). Mediates SMAD2/3 activation by inducing its phosphorylation and subsequent translocation to the nucleus. Positively regulates odontoblastic differentiation in dental papilla cells, via promotion of IPO7-mediated translocation of phosphorylated SMAD2 to the nucleus and subsequent transcription of target genes. Can induce epithelial-to-mesenchymal transition (EMT) and cell migration in various cell types. This is Transforming growth factor beta-1 proprotein (TGFB1) from Ovis aries (Sheep).